The following is an 834-amino-acid chain: Protein translocase subunit SecA (834 aa).

Residues Gln-85, 103–107 (GEGKT), and Asp-491 contribute to the ATP site. The Zn(2+) site is built by Cys-818, Cys-820, Cys-829, and Cys-830.

This sequence belongs to the SecA family. As to quaternary structure, monomer and homodimer. Part of the essential Sec protein translocation apparatus which comprises SecA, SecYEG and auxiliary proteins SecDF. Other proteins may also be involved. It depends on Zn(2+) as a cofactor.

It localises to the cell membrane. The protein resides in the cytoplasm. The enzyme catalyses ATP + H2O + cellular proteinSide 1 = ADP + phosphate + cellular proteinSide 2.. Functionally, part of the Sec protein translocase complex. Interacts with the SecYEG preprotein conducting channel. Has a central role in coupling the hydrolysis of ATP to the transfer of proteins into and across the cell membrane, serving as an ATP-driven molecular motor driving the stepwise translocation of polypeptide chains across the membrane. This is Protein translocase subunit SecA from Clostridium kluyveri (strain ATCC 8527 / DSM 555 / NBRC 12016 / NCIMB 10680 / K1).